The following is a 259-amino-acid chain: Type III pantothenate kinase (259 aa).

6 to 13 lines the ATP pocket; sequence DVGNTNIV. Residues Tyr-100 and 107 to 110 contribute to the substrate site; that span reads GADR. Asp-109 serves as the catalytic Proton acceptor. Asp-129 serves as a coordination point for K(+). Residue Thr-132 coordinates ATP. Thr-184 is a substrate binding site.

Belongs to the type III pantothenate kinase family. Homodimer. It depends on NH4(+) as a cofactor. The cofactor is K(+).

Its subcellular location is the cytoplasm. The enzyme catalyses (R)-pantothenate + ATP = (R)-4'-phosphopantothenate + ADP + H(+). It participates in cofactor biosynthesis; coenzyme A biosynthesis; CoA from (R)-pantothenate: step 1/5. Catalyzes the phosphorylation of pantothenate (Pan), the first step in CoA biosynthesis. The sequence is that of Type III pantothenate kinase from Clostridium perfringens (strain ATCC 13124 / DSM 756 / JCM 1290 / NCIMB 6125 / NCTC 8237 / Type A).